A 484-amino-acid polypeptide reads, in one-letter code: Protein nucleotidyltransferase YdiU (484 aa).

The ATP site is built by Gly87, Gly89, Arg90, Lys110, Asp122, Gly123, Arg173, and Arg180. The active-site Proton acceptor is Asp249. The Mg(2+) site is built by Asn250 and Asp259. Position 259 (Asp259) interacts with ATP.

It belongs to the SELO family. Requires Mg(2+) as cofactor. Mn(2+) is required as a cofactor.

The catalysed reaction is L-seryl-[protein] + ATP = 3-O-(5'-adenylyl)-L-seryl-[protein] + diphosphate. It carries out the reaction L-threonyl-[protein] + ATP = 3-O-(5'-adenylyl)-L-threonyl-[protein] + diphosphate. It catalyses the reaction L-tyrosyl-[protein] + ATP = O-(5'-adenylyl)-L-tyrosyl-[protein] + diphosphate. The enzyme catalyses L-histidyl-[protein] + UTP = N(tele)-(5'-uridylyl)-L-histidyl-[protein] + diphosphate. The catalysed reaction is L-seryl-[protein] + UTP = O-(5'-uridylyl)-L-seryl-[protein] + diphosphate. It carries out the reaction L-tyrosyl-[protein] + UTP = O-(5'-uridylyl)-L-tyrosyl-[protein] + diphosphate. Nucleotidyltransferase involved in the post-translational modification of proteins. It can catalyze the addition of adenosine monophosphate (AMP) or uridine monophosphate (UMP) to a protein, resulting in modifications known as AMPylation and UMPylation. The protein is Protein nucleotidyltransferase YdiU of Alcanivorax borkumensis (strain ATCC 700651 / DSM 11573 / NCIMB 13689 / SK2).